The following is a 343-amino-acid chain: MKIKALSKLKPEEGIWMTEVEKPEMGHNDLLIRIKKTAICGTDVHIYNWDEWSQNTIPVPMVVGHEYVGEVVGIGQEVRGFEIGDRVSGEGHITCGHCRNCRGGRTHLCRNTTGVGVNRTGAFSEFLVIPAFNAFKIPAEISDDLASIFDPFGNAVHTALSFDLVGEDVLITGAGPIGIMAAAVAKHVGARHVVITDVNEYRLDLARQMGVTRAVNVMEEKLEDVMSDLGMTEGFDVGLEMSGNPSAFNSMLTNMNHGGKISLLGIPPSDMAVDWNQVIFKGLVIKGIYGREMFETWYKMASLIQSGLDLTPIITHHYKVDDFQKGFDMMRSGMSGKVILDWE.

Cys-40 is a Zn(2+) binding site. Residues Thr-42 and His-45 each act as charge relay system in the active site. Positions 65, 66, 95, 98, 101, and 109 each coordinate Zn(2+). NAD(+)-binding positions include Ile-177, Asp-197, Arg-202, 264 to 266 (LGI), and 288 to 289 (IY).

This sequence belongs to the zinc-containing alcohol dehydrogenase family. As to quaternary structure, homotetramer. Requires Zn(2+) as cofactor.

The protein resides in the cytoplasm. It carries out the reaction L-threonine + NAD(+) = (2S)-2-amino-3-oxobutanoate + NADH + H(+). It functions in the pathway amino-acid degradation; L-threonine degradation via oxydo-reductase pathway; glycine from L-threonine: step 1/2. Functionally, catalyzes the NAD(+)-dependent oxidation of L-threonine to 2-amino-3-ketobutyrate. In Vibrio atlanticus (strain LGP32) (Vibrio splendidus (strain Mel32)), this protein is L-threonine 3-dehydrogenase.